The sequence spans 37 residues: Large ribosomal subunit protein bL36 (37 aa).

This sequence belongs to the bacterial ribosomal protein bL36 family.

In Ureaplasma parvum serovar 3 (strain ATCC 27815 / 27 / NCTC 11736), this protein is Large ribosomal subunit protein bL36.